The following is a 173-amino-acid chain: Flagellar biosynthetic protein FliV (173 aa).

It belongs to the FliB family.

Required for the secretion of flagellin and expression of motility. This is Flagellar biosynthetic protein FliV (fliV) from Salmonella muenchen.